A 79-amino-acid chain; its full sequence is Acyl carrier protein (79 aa).

Positions Ser2 to Lys77 constitute a Carrier domain. O-(pantetheine 4'-phosphoryl)serine is present on Ser37.

The protein belongs to the acyl carrier protein (ACP) family. In terms of processing, 4'-phosphopantetheine is transferred from CoA to a specific serine of apo-ACP by AcpS. This modification is essential for activity because fatty acids are bound in thioester linkage to the sulfhydryl of the prosthetic group.

The protein localises to the cytoplasm. It functions in the pathway lipid metabolism; fatty acid biosynthesis. In terms of biological role, carrier of the growing fatty acid chain in fatty acid biosynthesis. This chain is Acyl carrier protein, found in Acidiphilium cryptum (strain JF-5).